The primary structure comprises 193 residues: Outer-membrane lipoprotein LolB (193 aa).

An N-terminal signal peptide occupies residues 1 to 21 (MRPARRFLAALACVAGALLSA). Cys-22 carries N-palmitoyl cysteine lipidation. Cys-22 is lipidated: S-diacylglycerol cysteine.

Belongs to the LolB family. As to quaternary structure, monomer.

The protein resides in the cell outer membrane. Plays a critical role in the incorporation of lipoproteins in the outer membrane after they are released by the LolA protein. The sequence is that of Outer-membrane lipoprotein LolB from Azoarcus sp. (strain BH72).